The chain runs to 273 residues: 3-methyl-2-oxobutanoate hydroxymethyltransferase (273 aa).

Aspartate 49 and aspartate 88 together coordinate Mg(2+). 3-methyl-2-oxobutanoate is bound by residues 49–50 (DS), aspartate 88, and lysine 118. Glutamate 120 lines the Mg(2+) pocket. The active-site Proton acceptor is the glutamate 187.

It belongs to the PanB family. In terms of assembly, homodecamer; pentamer of dimers. Mg(2+) serves as cofactor.

It localises to the cytoplasm. It carries out the reaction 3-methyl-2-oxobutanoate + (6R)-5,10-methylene-5,6,7,8-tetrahydrofolate + H2O = 2-dehydropantoate + (6S)-5,6,7,8-tetrahydrofolate. It functions in the pathway cofactor biosynthesis; (R)-pantothenate biosynthesis; (R)-pantoate from 3-methyl-2-oxobutanoate: step 1/2. Functionally, catalyzes the reversible reaction in which hydroxymethyl group from 5,10-methylenetetrahydrofolate is transferred onto alpha-ketoisovalerate to form ketopantoate. The sequence is that of 3-methyl-2-oxobutanoate hydroxymethyltransferase from Rhizobium etli (strain ATCC 51251 / DSM 11541 / JCM 21823 / NBRC 15573 / CFN 42).